A 235-amino-acid polypeptide reads, in one-letter code: MGQKVHPHGIRLGIVKPWSSTWFANTQDFADNLEGDFKVRKFLNKELASASVSRITIERPAKSIRVTIHTARPGIVIGKKGEDVEKLRNAVSKIAGVPAQINIAEVKKPELDAKLVADSIASQLERRVMFRRAMKRAVQSAMRLGAKGIKVEVSGRLGGAEIARSEWYREGRVPLHTLRADIDYNTAEAHTTYGVIGVKVWIFKGEILGGMAAVAQSEQQPADKPKKAPRGKGRK.

One can recognise a KH type-2 domain in the interval 39–107; the sequence is VRKFLNKELA…PAQINIAEVK (69 aa). The interval 215–235 is disordered; it reads AQSEQQPADKPKKAPRGKGRK.

The protein belongs to the universal ribosomal protein uS3 family. Part of the 30S ribosomal subunit. Forms a tight complex with proteins S10 and S14.

In terms of biological role, binds the lower part of the 30S subunit head. Binds mRNA in the 70S ribosome, positioning it for translation. The chain is Small ribosomal subunit protein uS3 from Haemophilus influenzae (strain ATCC 51907 / DSM 11121 / KW20 / Rd).